Here is a 58-residue protein sequence, read N- to C-terminus: Enterocin-HF (58 aa).

The propeptide occupies 1 to 15 (MEKLTVKEMSQVVGG). The cysteines at positions 24 and 29 are disulfide-linked.

It localises to the secreted. Bacteriocin. The polypeptide is Enterocin-HF (entHF) (Enterococcus faecium (Streptococcus faecium)).